The following is a 279-amino-acid chain: Elongation factor Ts (279 aa).

The involved in Mg(2+) ion dislocation from EF-Tu stretch occupies residues 79 to 82 (TDFV).

It belongs to the EF-Ts family.

Its subcellular location is the cytoplasm. Its function is as follows. Associates with the EF-Tu.GDP complex and induces the exchange of GDP to GTP. It remains bound to the aminoacyl-tRNA.EF-Tu.GTP complex up to the GTP hydrolysis stage on the ribosome. In Phytoplasma mali (strain AT), this protein is Elongation factor Ts.